Consider the following 324-residue polypeptide: Cysteine-rich repeat secretory protein 9 (324 aa).

Positions 1–27 are cleaved as a signal peptide; that stretch reads MARIIITLTIPLFYFFFFSLLSHQTMS. 2 Gnk2-homologous domains span residues 29–132 and 138–248; these read PDHI…NVSF and IVPS…TSVL. A disordered region spans residues 251 to 286; it reads PPPSPSAPPPRSPPPKSSPPSSLPQTPSPPLVFTPP.

It belongs to the cysteine-rich repeat secretory protein family.

It is found in the secreted. The sequence is that of Cysteine-rich repeat secretory protein 9 (CRRSP9) from Arabidopsis thaliana (Mouse-ear cress).